The chain runs to 265 residues: GTP cyclohydrolase FolE2 (265 aa).

Belongs to the GTP cyclohydrolase IV family.

The catalysed reaction is GTP + H2O = 7,8-dihydroneopterin 3'-triphosphate + formate + H(+). The protein operates within cofactor biosynthesis; 7,8-dihydroneopterin triphosphate biosynthesis; 7,8-dihydroneopterin triphosphate from GTP: step 1/1. Its function is as follows. Converts GTP to 7,8-dihydroneopterin triphosphate. This chain is GTP cyclohydrolase FolE2, found in Bordetella avium (strain 197N).